An 806-amino-acid chain; its full sequence is Sperm head and tail associated protein (806 aa).

4 disordered regions span residues 1–36, 257–329, 428–496, and 707–806; these read MNSS…PSSC, TPAS…MSGS, LNNQ…CPQP, and SQIN…SKKK. A compositionally biased stretch (polar residues) spans 13-27; it reads APSTSPQADCPNNYS. A compositionally biased stretch (low complexity) spans 277-290; it reads PPLSSASSPPSGNP. Polar residues predominate over residues 320-329; sequence LSSQAGMSGS. Residues 521 to 806 are interaction with CRISP2; the sequence is KEPPPETAVL…QIKSPHSKKK (286 aa). 2 stretches are compositionally biased toward low complexity: residues 710 to 723 and 733 to 754; these read NHQN…KNSS and RRGA…SSTQ. Over residues 773-788 the composition is skewed to polar residues; it reads QSQSPADGKIESQSKS.

As to quaternary structure, interacts with CRISP2. In terms of tissue distribution, isoforms 3 and 4 are expressed in testis (at protein level).

The protein localises to the cytoplasm. Plays a role during spermatogenesis. In Mus musculus (Mouse), this protein is Sperm head and tail associated protein (Nsun4).